A 132-amino-acid chain; its full sequence is Small ribosomal subunit protein uS8 (132 aa).

The protein belongs to the universal ribosomal protein uS8 family. Part of the 30S ribosomal subunit. Contacts proteins S5 and S12.

Its function is as follows. One of the primary rRNA binding proteins, it binds directly to 16S rRNA central domain where it helps coordinate assembly of the platform of the 30S subunit. This chain is Small ribosomal subunit protein uS8, found in Rickettsia typhi (strain ATCC VR-144 / Wilmington).